The chain runs to 391 residues: Elongation factor Tu (391 aa).

The 192-residue stretch at 10–201 folds into the tr-type G domain; the sequence is KPHVNIGTIG…QVDAYIPTPV (192 aa). The segment at 19-26 is G1; sequence GHVDHGKT. 19–26 contacts GTP; that stretch reads GHVDHGKT. Threonine 26 is a Mg(2+) binding site. Residues 55 to 59 form a G2 region; the sequence is GITIS. The interval 76-79 is G3; the sequence is DCPG. GTP is bound by residues 76–80 and 131–134; these read DCPGH and NKVD. Residues 131 to 134 form a G4 region; sequence NKVD. The tract at residues 169–171 is G5; sequence SAL.

The protein belongs to the TRAFAC class translation factor GTPase superfamily. Classic translation factor GTPase family. EF-Tu/EF-1A subfamily. As to quaternary structure, monomer.

The protein localises to the cytoplasm. It carries out the reaction GTP + H2O = GDP + phosphate + H(+). Functionally, GTP hydrolase that promotes the GTP-dependent binding of aminoacyl-tRNA to the A-site of ribosomes during protein biosynthesis. In Mesorhizobium japonicum (strain LMG 29417 / CECT 9101 / MAFF 303099) (Mesorhizobium loti (strain MAFF 303099)), this protein is Elongation factor Tu.